The primary structure comprises 365 residues: Protein BIIDXI (365 aa).

The N-terminal stretch at 1–21 (MKEMGVIVLLLLHSFFYVAFC) is a signal peptide. N48, N121, and N208 each carry an N-linked (GlcNAc...) asparagine glycan.

Interacts with PME3. Mainly expressed in vascular tissues of roots, leaves, stamens and petals.

It is found in the secreted. The protein localises to the cell wall. Together with At5g11420, acts as a positive regulator of PME3 activity during several developmental processes, including reproductive organ development, hypocotyls elongation, seed germination and endosperm (testa) rupture at the micropyle, probably by modulating the pectin methylation status in cell walls. Involved in the regulation of pectin methylation degree to modulate cell wall physiology during cell separation, hypocotyl growth and embryo development. Required during embryo development, especially to regulate homogalacturonans (HG) methyl esterification in endosperm cell walls, a process related to embryo bending. Also implicated in hypocotyl growth and gravitropic response via the regulation of auxin efflux. Also regulates cell wall pectin upon root-knot nematode Meloidogyne incognita infection. The sequence is that of Protein BIIDXI from Arabidopsis thaliana (Mouse-ear cress).